The primary structure comprises 72 residues: Large ribosomal subunit protein bL32c (72 aa).

The interval proline 49–glutamate 72 is disordered. Over residues aspartate 59–glutamate 72 the composition is skewed to basic and acidic residues.

The protein belongs to the bacterial ribosomal protein bL32 family.

It localises to the plastid. Its subcellular location is the chloroplast. The chain is Large ribosomal subunit protein bL32c from Ostreococcus tauri.